A 446-amino-acid chain; its full sequence is N-succinylarginine dihydrolase (446 aa).

Residues A19–S28, N110, and H137–R138 contribute to the substrate site. E174 is an active-site residue. R213 lines the substrate pocket. H249 is a catalytic residue. Substrate is bound by residues D251 and N364. C370 functions as the Nucleophile in the catalytic mechanism.

The protein belongs to the succinylarginine dihydrolase family. In terms of assembly, homodimer.

The enzyme catalyses N(2)-succinyl-L-arginine + 2 H2O + 2 H(+) = N(2)-succinyl-L-ornithine + 2 NH4(+) + CO2. It functions in the pathway amino-acid degradation; L-arginine degradation via AST pathway; L-glutamate and succinate from L-arginine: step 2/5. In terms of biological role, catalyzes the hydrolysis of N(2)-succinylarginine into N(2)-succinylornithine, ammonia and CO(2). The polypeptide is N-succinylarginine dihydrolase (Serratia proteamaculans (strain 568)).